The following is a 322-amino-acid chain: Putative HTH-type transcriptional regulatory protein rrnAC2519 (322 aa).

Positions 132 to 189 (LADVREDRDWSLGRLAKELGVSRRTVSKYEDGMDASVEVAAELEDLFDAPLTSPVSVL) constitute an HTH cro/C1-type domain. The H-T-H motif DNA-binding region spans 143-162 (LGRLAKELGVSRRTVSKYED).

The sequence is that of Putative HTH-type transcriptional regulatory protein rrnAC2519 from Haloarcula marismortui (strain ATCC 43049 / DSM 3752 / JCM 8966 / VKM B-1809) (Halobacterium marismortui).